Reading from the N-terminus, the 915-residue chain is MPSDIMEQRGVSTPSHFHEDIHITSERQFGFMKTDMMPENQGGRDRLSSMPKSSWTSESYQLKPQSSFSGSHPSGSPNARNTTNGSQWESSLFSSSMSDLFSRKLRLQGSDMLSTMSANTVVTHREEEPSESLEEIEAQTIGNLLPDEDDLFAEVTGEVGRKSRANTGDELDEFDLFSSVGGMELDGDIFSSVSHRNGERGGNNSVGELNRGEIPSRTLLVGNISSNVEDYELKVLFEQFGDIQALHTACKNRGFIMVSYCDIRAAQNAARALQNKLLRGTKLDIRYSISKENPSQKDTSKGALLVNNLDSSISNQELNRLVKSYGEVKEIRRTMHDNSQIYIEFFDVRAAAAALGGLNGLEVAGKKLQLVPTYPEGTRYTSQCAANDTEGCLPKTSYSNTSSGHIGRHFPGMISSTSSDGGSMRVIHNSIGSPVNSFIERHRSLSIPIGFPPSANGISASKPVGLQEHGHHFDNSNMGIQSMPNLHPHSFSEYVDNFANGSPYTSSAFSEMVSDGSKANEGFMIHNVRGVEGFSGGGIGSPMHQSSRRPINLWSNSNTQQQNPSSGMMWPNSPSHINSIPTQRPPVTVFSRAPPIMVNMASSPVHHHIGSAPVLNSPFWDRRQAYVAESLESSGFHIGSHGSMGIPGSSPSHPMDIGSHKTFSVGGNRMDVNSQNAVLRSPQQLSHLFPGRSPMGSMPGSFDSPNERYRNLSHRRSESSSSNADKKLYELDVDRILRGEDRRTTLMIKNIPNKYTSKMLLSAIDEHCKGTYDFLYLPIDFKNKCNVGYAFINLIEPEKIVPFFKAFNGKKWEKFNSEKVATLTYARIQGKTALIAHFQNSSLMNEDKRCRPILFHTDGPNAGDQEPFPMGSNIRSRPGKPRSSSIDNYNSFSISSVSENREETPNGTDPFLKEN.

Positions 1-90 are disordered; that stretch reads MPSDIMEQRG…NTTNGSQWES (90 aa). The span at 16 to 25 shows a compositional bias: basic and acidic residues; that stretch reads HFHEDIHITS. Residues 50–65 are compositionally biased toward polar residues; that stretch reads MPKSSWTSESYQLKPQ. Residues 66–77 are compositionally biased toward low complexity; that stretch reads SSFSGSHPSGSP. Ser76 bears the Phosphoserine mark. The segment covering 78–89 has biased composition (polar residues); that stretch reads NARNTTNGSQWE. 2 RRM domains span residues 217–290 and 302–375; these read RTLL…YSIS and GALL…PTYP. Disordered regions lie at residues 690–723 and 854–915; these read PGRSPMGSMPGSFDSPNERYRNLSHRRSESSSSN and LFHT…LKEN. A compositionally biased stretch (basic and acidic residues) spans 705–723; it reads PNERYRNLSHRRSESSSSN. Residues 882–898 show a composition bias toward polar residues; the sequence is RSSSIDNYNSFSISSVS.

As to expression, expressed in roots, shoots, leaves, flowers and siliques.

Probable RNA-binding transcriptional activator that plays a role in meiosis and vegetative growth. May be a downstream effector of TOR signaling pathway and recruited by RAPTOR1 for TOR substrate. The chain is Protein MEI2-like 1 (ML1) from Arabidopsis thaliana (Mouse-ear cress).